The chain runs to 64 residues: Temporin-ALg (64 aa).

The N-terminal stretch at 1–22 (MFTLKKSLLLLFFLGTINLSLC) is a signal peptide. A propeptide spanning residues 23-46 (EQERNAEEERRDDLGERQAEVEKR) is cleaved from the precursor. Leu-62 carries the post-translational modification Leucine amide.

Belongs to the frog skin active peptide (FSAP) family. Temporin subfamily. In terms of tissue distribution, expressed by the skin glands.

It localises to the secreted. Antimicrobial peptide with activity against Gram-positive and Gram-negative bacteria and against fungi. Has been tested against S.aureus (MIC=2.5 ug/mL), B.pumilus (MIC=2.5 ug/mL), B.cereus (MIC=30.0 ug/mL), E.coli (MIC=5.0 ug/mL), B.dysenteriae (MIC=10.0 ug/mL), A.cacoaceticus (MIC=30.0 ug/mL), P.aeruginosa (MIC=7.5 ug/mL) and C.albicans (MIC=1.25 ug/mL). Also shows a weak hemolytic activity. In Amolops loloensis (Lolokou Sucker Frog), this protein is Temporin-ALg.